The sequence spans 255 residues: 1-(5-phosphoribosyl)-5-[(5-phosphoribosylamino)methylideneamino] imidazole-4-carboxamide isomerase (255 aa).

The Proton acceptor role is filled by Asp-8. Asp-129 serves as the catalytic Proton donor.

This sequence belongs to the HisA/HisF family.

It is found in the cytoplasm. It carries out the reaction 1-(5-phospho-beta-D-ribosyl)-5-[(5-phospho-beta-D-ribosylamino)methylideneamino]imidazole-4-carboxamide = 5-[(5-phospho-1-deoxy-D-ribulos-1-ylimino)methylamino]-1-(5-phospho-beta-D-ribosyl)imidazole-4-carboxamide. It participates in amino-acid biosynthesis; L-histidine biosynthesis; L-histidine from 5-phospho-alpha-D-ribose 1-diphosphate: step 4/9. This chain is 1-(5-phosphoribosyl)-5-[(5-phosphoribosylamino)methylideneamino] imidazole-4-carboxamide isomerase, found in Prochlorococcus marinus subsp. pastoris (strain CCMP1986 / NIES-2087 / MED4).